Reading from the N-terminus, the 252-residue chain is F-box/SPRY domain-containing protein 1 (252 aa).

The F-box domain occupies 1-48 (MVDPLCNYNVLESIFSYLELNDLNRCSQVCKSWYHFLNDENSDVWRWH). Positions 58–250 (VKSDLLSSVT…VSMVYLGTPL (193 aa)) constitute a B30.2/SPRY domain.

Belongs to the FBXO45/Fsn family. Component of an E3 ubiquitin ligase complex composed of hiw and Fsn.

Its subcellular location is the synapse. Its pathway is protein modification; protein ubiquitination. Functionally, required in the presynaptic motoneuron to down-regulate the levels of wnd and restrain synaptic terminal growth at the neuromuscular junction (NMJ). The sequence is that of F-box/SPRY domain-containing protein 1 from Drosophila grimshawi (Hawaiian fruit fly).